The chain runs to 103 residues: Small ribosomal subunit protein uS10 (103 aa).

The protein belongs to the universal ribosomal protein uS10 family. As to quaternary structure, part of the 30S ribosomal subunit.

In terms of biological role, involved in the binding of tRNA to the ribosomes. In Burkholderia mallei (strain NCTC 10247), this protein is Small ribosomal subunit protein uS10.